The following is a 284-amino-acid chain: Bifunctional protein FolD (284 aa).

Residues 165-167 (GRS), S190, and V231 contribute to the NADP(+) site.

The protein belongs to the tetrahydrofolate dehydrogenase/cyclohydrolase family. As to quaternary structure, homodimer.

The catalysed reaction is (6R)-5,10-methylene-5,6,7,8-tetrahydrofolate + NADP(+) = (6R)-5,10-methenyltetrahydrofolate + NADPH. The enzyme catalyses (6R)-5,10-methenyltetrahydrofolate + H2O = (6R)-10-formyltetrahydrofolate + H(+). Its pathway is one-carbon metabolism; tetrahydrofolate interconversion. In terms of biological role, catalyzes the oxidation of 5,10-methylenetetrahydrofolate to 5,10-methenyltetrahydrofolate and then the hydrolysis of 5,10-methenyltetrahydrofolate to 10-formyltetrahydrofolate. The polypeptide is Bifunctional protein FolD (Geobacillus thermodenitrificans (strain NG80-2)).